The following is a 770-amino-acid chain: Protein PAT1 homolog 1 (770 aa).

Positions 1–42 (MFRYESLEDCPLDEDEDAFQGLGEEDEEIDQFNDDTFGSGAV) are disordered. Positions 1–84 (MFRYESLEDC…EMDLLGDHEE (84 aa)) are region A; interaction with DDX6/RCK. The involved in nuclear foci localization stretch occupies residues 1–397 (MFRYESLEDC…HQSSHQDHLR (397 aa)). Acidic residues predominate over residues 7–33 (LEDCPLDEDEDAFQGLGEEDEEIDQFN). Residues 85 to 388 (NLAERLSKMV…LNGTGDRGGH (304 aa)) form a region N; interaction with decapping machinery region. Residues 86-95 (LAERLSKMVI) carry the Nuclear export signal motif. The interval 155–195 (PQRPLQGPEDDRDLSERALPRRSTSPIIGSPPVRAVPIGTP) is disordered. Serine 177 bears the Phosphoserine mark. The residue at position 178 (threonine 178) is a Phosphothreonine. Residues serine 179 and serine 184 each carry the phosphoserine modification. A Phosphothreonine modification is found at threonine 194. An asymmetric dimethylarginine mark is found at arginine 217, arginine 223, and arginine 263. An involved in RNA-binding region spans residues 223–397 (RYPAPYGERI…HQSSHQDHLR (175 aa)). Position 278 is a phosphoserine (serine 278). Arginine 284 bears the Asymmetric dimethylarginine mark. 2 disordered regions span residues 319–340 (FSAP…GPHL) and 376–396 (HRNL…QDHL). The span at 321–337 (APPPATPPPQQHPPGPG) shows a compositional bias: pro residues. Residue arginine 385 is modified to Omega-N-methylarginine. A compositionally biased stretch (basic and acidic residues) spans 385–396 (RGGHQSSHQDHL). Residues 389 to 448 (QSSHQDHLRKDPYANLMLQREKDWVSKIQMMQLQSTDPYLDDFYYQNYFEKLEKLSAAEE) form a region H region. The interval 398–770 (KDPYANLMLQ…TKLQLVQGIR (373 aa)) is involved in nuclear speckle localization. Residues 449–770 (IQGDGPKKER…TKLQLVQGIR (322 aa)) are region C.

Belongs to the PAT1 family. As to quaternary structure, interacts (via region A) with DDX6/RCK. Interacts (via region H and region C) with LSM1 and LSM4. Interacts (via region N) with DCP1A, DCP2, EDC3, EDC4 and XRN1. Interacts with the CCR4-NOT complex. Interacts with the Lsm-containing SMN-Sm protein complex. Interacts with EIF4ENIF1/4E-T.

The protein resides in the cytoplasm. The protein localises to the P-body. Its subcellular location is the nucleus. It localises to the PML body. It is found in the nucleus speckle. Its function is as follows. RNA-binding protein involved in deadenylation-dependent decapping of mRNAs, leading to the degradation of mRNAs. Acts as a scaffold protein that connects deadenylation and decapping machinery. Required for cytoplasmic mRNA processing body (P-body) assembly. The protein is Protein PAT1 homolog 1 (Patl1) of Mus musculus (Mouse).